Here is a 469-residue protein sequence, read N- to C-terminus: Type II secretion system protein HxcR (469 aa).

246–253 (GPTGSGKT) contributes to the ATP binding site.

Belongs to the GSP E family.

Its subcellular location is the cytoplasm. It carries out the reaction ATP + H2O + cellular proteinSide 1 = ADP + phosphate + cellular proteinSide 2.. Its function is as follows. ATPase component of the type II secretion system required for the energy-dependent secretion of extracellular factors from the periplasm. Acts as a molecular motor to provide the energy that is required for the export of proteins. The Hxc system is involved in the secretion of low-molecular-weight alkaline phosphatase L-AP (LapA). Is probably also involved in the secretion of the phosphate-binding protein PstS. The sequence is that of Type II secretion system protein HxcR from Pseudomonas aeruginosa (strain ATCC 15692 / DSM 22644 / CIP 104116 / JCM 14847 / LMG 12228 / 1C / PRS 101 / PAO1).